The following is a 179-amino-acid chain: Translation initiation factor IF-3 (179 aa).

This sequence belongs to the IF-3 family. In terms of assembly, monomer.

Its subcellular location is the cytoplasm. In terms of biological role, IF-3 binds to the 30S ribosomal subunit and shifts the equilibrium between 70S ribosomes and their 50S and 30S subunits in favor of the free subunits, thus enhancing the availability of 30S subunits on which protein synthesis initiation begins. The chain is Translation initiation factor IF-3 from Leptospira borgpetersenii serovar Hardjo-bovis (strain L550).